The primary structure comprises 228 residues: UPF0758 protein SH1266 (228 aa).

The 123-residue stretch at 102 to 224 (KITSPSDVSN…YASLVEEGYF (123 aa)) folds into the MPN domain. Residues His-173, His-175, and Asp-186 each coordinate Zn(2+). The JAMM motif motif lies at 173 to 186 (HNHPSGDVTPSKED).

It belongs to the UPF0758 family.

This is UPF0758 protein SH1266 from Staphylococcus haemolyticus (strain JCSC1435).